We begin with the raw amino-acid sequence, 293 residues long: Protein bcp-1 (293 aa).

The segment covering 1 to 12 has biased composition (basic and acidic residues); sequence MGKKRSREEAQK. A disordered region spans residues 1-35; the sequence is MGKKRSREEAQKEVVQNDPTVDKMDEDSDSSDSDE. The segment covering 24–35 has biased composition (acidic residues); sequence MDEDSDSSDSDE.

It belongs to the BCP1 family.

The protein localises to the cytoplasm. Its subcellular location is the nucleus. Involved in nuclear export, actin cytoskeleton organization and vesicular transport. The protein is Protein bcp-1 (bcp-1) of Neurospora crassa (strain ATCC 24698 / 74-OR23-1A / CBS 708.71 / DSM 1257 / FGSC 987).